The following is a 109-amino-acid chain: Aquaporin-2 (109 aa).

Over 1–6 (SIAFSR) the chain is Cytoplasmic. Residues 7-27 (AVFSEFLATLLFVFFGLGSAL) traverse the membrane as a helical segment. The Extracellular segment spans residues 28 to 35 (NWPQALPS). Residues 36-54 (VLQIAMAFGLAIGTLVQTL) traverse the membrane as a helical segment. The Cytoplasmic segment spans residues 55 to 59 (GHISG). Residues 60–69 (AHINPAVTVA) constitute an intramembrane region (discontinuously helical). An NPA 1 motif is present at residues 63 to 65 (NPA). Topologically, residues 70–80 (CLVGCHVSFLR) are cytoplasmic. The chain crosses the membrane as a helical span at residues 81–102 (ATFYLAAQLLGAVAGAALLHEL). Topologically, residues 103 to 109 (TPPDIRG) are extracellular.

The protein belongs to the MIP/aquaporin (TC 1.A.8) family. Homotetramer. Post-translationally, serine phosphorylation is necessary and sufficient for expression at the apical membrane. Endocytosis is not phosphorylation-dependent. N-glycosylated.

The protein localises to the apical cell membrane. The protein resides in the basolateral cell membrane. Its subcellular location is the cell membrane. It localises to the cytoplasmic vesicle membrane. It is found in the golgi apparatus. The protein localises to the trans-Golgi network membrane. It catalyses the reaction H2O(in) = H2O(out). The enzyme catalyses glycerol(in) = glycerol(out). Forms a water-specific channel that provides the plasma membranes of renal collecting duct with high permeability to water, thereby permitting water to move in the direction of an osmotic gradient. Plays an essential role in renal water homeostasis. Could also be permeable to glycerol. This is Aquaporin-2 from Elephas maximus (Indian elephant).